A 71-amino-acid polypeptide reads, in one-letter code: Prokaryotic ubiquitin-like protein Pup (71 aa).

A compositionally biased stretch (low complexity) spans 1–18 (MATRDSGGQSQTGRSQQG). The interval 1 to 42 (MATRDSGGQSQTGRSQQGEEIEDVTTEASAEAAERHAEITED) is disordered. Residues 27–65 (EASAEAAERHAEITEDVDDLLDEIDSVLEENAEEFVRGY) form an ARC ATPase binding region. Positions 29–60 (SAEAAERHAEITEDVDDLLDEIDSVLEENAEE) form a coiled coil. Residue E71 forms an Isoglutamyl lysine isopeptide (Glu-Lys) (interchain with K-? in acceptor proteins) linkage.

Belongs to the prokaryotic ubiquitin-like protein family. Strongly interacts with the proteasome-associated ATPase ARC through a hydrophobic interface; the interacting region of Pup lies in its C-terminal half. There is one Pup binding site per ARC hexamer ring.

It participates in protein degradation; proteasomal Pup-dependent pathway. Its function is as follows. Protein modifier that is covalently attached to lysine residues of substrate proteins, thereby targeting them for proteasomal degradation. The tagging system is termed pupylation. The sequence is that of Prokaryotic ubiquitin-like protein Pup from Salinispora tropica (strain ATCC BAA-916 / DSM 44818 / JCM 13857 / NBRC 105044 / CNB-440).